The sequence spans 563 residues: Tripeptidyl-peptidase 1 (563 aa).

The signal sequence occupies residues 1–19 (MGLQACLLGLFALILSGKC). A propeptide spans 20-195 (SYSPEPDQRR…PEPQVTGTVG (176 aa)) (removed in mature form). Cys-111 and Cys-122 are oxidised to a cystine. In terms of domain architecture, Peptidase S53 spans 199-563 (GVTPSVIRKR…PALLKTLLNP (365 aa)). N-linked (GlcNAc...) asparagine glycosylation is found at Asn-210 and Asn-222. Active-site charge relay system residues include Glu-272 and Asp-276. N-linked (GlcNAc...) asparagine glycosylation is found at Asn-286, Asn-313, and Asn-443. Intrachain disulfides connect Cys-365-Cys-526 and Cys-522-Cys-537. Ser-475 (charge relay system) is an active-site residue. Residues Asp-517 and Val-518 each contribute to the Ca(2+) site. Residues Gly-539, Gly-541, and Asp-543 each contribute to the Ca(2+) site.

As to quaternary structure, monomer. Interacts with CLN5. Interacts with CLN3. It depends on Ca(2+) as a cofactor. In terms of processing, activated by autocatalytic proteolytical processing upon acidification. N-glycosylation is required for processing and activity.

It localises to the lysosome. It is found in the melanosome. The catalysed reaction is Release of an N-terminal tripeptide from a polypeptide, but also has endopeptidase activity.. Lysosomal serine protease with tripeptidyl-peptidase I activity. May act as a non-specific lysosomal peptidase which generates tripeptides from the breakdown products produced by lysosomal proteinases. Requires substrates with an unsubstituted N-terminus. The chain is Tripeptidyl-peptidase 1 (TPP1) from Macaca fascicularis (Crab-eating macaque).